The chain runs to 198 residues: Basic helix-loop-helix transcription factor amos (198 aa).

The interval 76-131 is disordered; it reads EQQQHHLQANPLGKNQGRSPRYWNKQQRSKPYDKLSTSMSSSTSSASSSSSSSAGF. The segment covering 111 to 129 has biased composition (low complexity); it reads STSMSSSTSSASSSSSSSA. Residues 138–190 enclose the bHLH domain; it reads KRRLAANARERRRMNSLNDAFDKLRDVVPSLGHDRRLSKYETLQMAQAYIGDL.

As to quaternary structure, efficient DNA binding requires dimerization with another bHLH protein. Interacts with Daughterless (da). During embryonic development, expression is seen in a small cluster of ectodermal cells during stage 10 which becomes restricted to 1 cell by stage 11. Expression is lost from this cell in the thorax and then the abdomen. Later expression is restricted to sensory organ precursors. Very transient expression was detected in distal leg disks at approximately 0-4 hours after puparium formation (APF), correlating with the anlage of the innervated tarsal claw.

The protein resides in the nucleus. In terms of biological role, transcription factor involved in early neurogenesis; sensillum basiconica formation and maybe sensillum trichodea development. Promotes multiple dendritic (MD) neuron formation. Required for olfactory sensilla; regulated by lozenge (lz). The protein is Basic helix-loop-helix transcription factor amos (amos) of Drosophila melanogaster (Fruit fly).